We begin with the raw amino-acid sequence, 404 residues long: S-adenosylmethionine synthase (404 aa).

141-146 (GQGSVD) contacts ATP.

This sequence belongs to the AdoMet synthase 2 family. Mg(2+) is required as a cofactor.

The catalysed reaction is L-methionine + ATP + H2O = S-adenosyl-L-methionine + phosphate + diphosphate. It participates in amino-acid biosynthesis; S-adenosyl-L-methionine biosynthesis; S-adenosyl-L-methionine from L-methionine: step 1/1. In terms of biological role, catalyzes the formation of S-adenosylmethionine from methionine and ATP. This chain is S-adenosylmethionine synthase, found in Methanococcus vannielii (strain ATCC 35089 / DSM 1224 / JCM 13029 / OCM 148 / SB).